We begin with the raw amino-acid sequence, 210 residues long: 3-hexulose-6-phosphate synthase (210 aa).

It belongs to the HPS/KGPDC family. HPS subfamily.

The catalysed reaction is D-ribulose 5-phosphate + formaldehyde = D-arabino-hex-3-ulose 6-phosphate. It participates in one-carbon metabolism; formaldehyde assimilation via RuMP pathway; D-fructose 6-phosphate from D-ribulose 5-phosphate and formaldehyde: step 1/2. Its function is as follows. Catalyzes the condensation of ribulose 5-phosphate with formaldehyde to form 3-hexulose 6-phosphate. This Staphylococcus epidermidis (strain ATCC 12228 / FDA PCI 1200) protein is 3-hexulose-6-phosphate synthase.